Here is a 230-residue protein sequence, read N- to C-terminus: Large ribosomal subunit protein uL1 (230 aa).

The protein belongs to the universal ribosomal protein uL1 family. Part of the 50S ribosomal subunit.

Binds directly to 23S rRNA. The L1 stalk is quite mobile in the ribosome, and is involved in E site tRNA release. In terms of biological role, protein L1 is also a translational repressor protein, it controls the translation of the L11 operon by binding to its mRNA. This is Large ribosomal subunit protein uL1 from Metamycoplasma arthritidis (strain 158L3-1) (Mycoplasma arthritidis).